The sequence spans 320 residues: Cytochrome f (320 aa).

An N-terminal signal peptide occupies residues 1–35 (MQNRNTFSWVKEQMTRSIFVSMMIYIITRASISNA). Residues tyrosine 36, cysteine 56, cysteine 59, and histidine 60 each coordinate heme. A helical membrane pass occupies residues 286–306 (IQGLFLFLASVILAQIFLVLK).

This sequence belongs to the cytochrome f family. As to quaternary structure, the 4 large subunits of the cytochrome b6-f complex are cytochrome b6, subunit IV (17 kDa polypeptide, petD), cytochrome f and the Rieske protein, while the 4 small subunits are PetG, PetL, PetM and PetN. The complex functions as a dimer. Heme is required as a cofactor.

It is found in the plastid. The protein resides in the chloroplast thylakoid membrane. In terms of biological role, component of the cytochrome b6-f complex, which mediates electron transfer between photosystem II (PSII) and photosystem I (PSI), cyclic electron flow around PSI, and state transitions. This Amborella trichopoda protein is Cytochrome f.